A 74-amino-acid polypeptide reads, in one-letter code: Translational regulator CsrA (74 aa).

This sequence belongs to the CsrA/RsmA family. As to quaternary structure, homodimer; the beta-strands of each monomer intercalate to form a hydrophobic core, while the alpha-helices form wings that extend away from the core.

It localises to the cytoplasm. Functionally, a translational regulator that binds mRNA to regulate translation initiation and/or mRNA stability. Usually binds in the 5'-UTR at or near the Shine-Dalgarno sequence preventing ribosome-binding, thus repressing translation. Its main target seems to be the major flagellin gene, while its function is anatagonized by FliW. In Alkaliphilus oremlandii (strain OhILAs) (Clostridium oremlandii (strain OhILAs)), this protein is Translational regulator CsrA.